The chain runs to 210 residues: Tetraspanin-31 (210 aa).

At 1–12 (MVCGGFACSKNA) the chain is on the cytoplasmic side. A helical transmembrane segment spans residues 13–33 (LCALNVVYMLVGLLLIGVAAW). Over 34–44 (AKGLGLVSSIH) the chain is Extracellular. The helical transmembrane segment at 45–65 (IIGGVIAVGVFLLLIAVAGLV) threads the bilayer. The Cytoplasmic portion of the chain corresponds to 66-72 (GAVNHHQ). Residues 73–93 (VLLFFYMIILGLVFIFQFGIS) traverse the membrane as a helical segment. At 94–173 (CSCLAINLSK…FLKHSDEALK (80 aa)) the chain is on the extracellular side. Asn-100, Asn-109, Asn-117, and Asn-134 each carry an N-linked (GlcNAc...) asparagine glycan. A helical transmembrane segment spans residues 174-194 (ILGGVGLFFSFTEILGVWLAM). The Cytoplasmic portion of the chain corresponds to 195-210 (RFRNQKDPRANPSAFL).

The protein belongs to the tetraspanin (TM4SF) family.

It is found in the membrane. This chain is Tetraspanin-31 (TSPAN31), found in Bos taurus (Bovine).